We begin with the raw amino-acid sequence, 93 residues long: Consomatin G2 (93 aa).

An N-terminal signal peptide occupies residues 1 to 18; sequence MQTAYWVMLMMMVCITAP. Residues 19 to 69 constitute a propeptide that is removed on maturation; it reads LPEGGKPNSGIRGLVPNDLTPQHTLRSLISRRQTDVLLDATLLTTPAPEQR. C72 and C77 are joined by a disulfide. The residue at position 74 (W74) is a D-tryptophan. A propeptide spanning residues 79–93 is cleaved from the precursor; that stretch reads WRPYPWRRRDLNGKR.

This sequence belongs to the conotoxin C superfamily. Consomatin family. In terms of tissue distribution, expressed by the venom duct.

It localises to the secreted. Moderately activates human somatostatin receptors (SSTR) with a preferential activation of SSTR1 and SSTR4. In vivo, does not cause behavioral changes in mice within a few minutes of intracranial injection, but causes a progressive loss of movement thereafter. Four to five hours after injection, mice recover, even with the highest dose tested. Shows antinociception and antihyperalgesia activities in two mouse models of acute pain, most probably by acting outside the central nervous system. The protein is Consomatin G2 of Conus geographus (Geography cone).